A 288-amino-acid chain; its full sequence is MGPRSSNRRSNAKDGFKGSNKASKFPLPLAMWDFGHCNPNACSGKRLERLGCVRNLRIGQKFRGVVITPNGKVPVSPADKEYFDNGGASVVECSWARIEEIPFSRIGGRCERLLPYLVASNPVNYGRPWRLNCAEALAACMYIVGYPNEARLLMDNFKWGHSFFEVNEELLDIYAQCHDAQDIQEKEKKYLEEMEASYQEQRNQTTDDIWSAGNLNHKPTLNTSSTHSNSEESRSPLHEPSEASLAHDEHSIPTDDNEETLTNLQANDVDEDEVWRKIVRMKVHSTDT.

Ser-43, Val-91, Leu-114, and Trp-129 together coordinate S-adenosyl-L-methionine. Polar residues predominate over residues Ile-209 to Leu-221. Residues Ile-209–Asn-267 form a disordered region. The span at Asn-229 to Pro-253 shows a compositional bias: basic and acidic residues.

Belongs to the TDD superfamily. TSR3 family.

It is found in the cytoplasm. It localises to the nucleus. It carries out the reaction an N(1)-methylpseudouridine in rRNA + S-adenosyl-L-methionine = N(1)-methyl-N(3)-[(3S)-3-amino-3-carboxypropyl]pseudouridine in rRNA + S-methyl-5'-thioadenosine + H(+). The enzyme catalyses N(1)-methylpseudouridine(1191) in yeast 18S rRNA + S-adenosyl-L-methionine = N(1)-methyl-N(3)-[(3S)-3-amino-3-carboxypropyl]pseudouridine(1191) in yeast 18S rRNA + S-methyl-5'-thioadenosine + H(+). Functionally, aminocarboxypropyltransferase that catalyzes the aminocarboxypropyl transfer on pseudouridine at position 1191 (Psi1191) in 18S rRNA. It constitutes the last step in biosynthesis of the hypermodified N1-methyl-N3-(3-amino-3-carboxypropyl) pseudouridine (m1acp3-Psi) conserved in eukaryotic 18S rRNA. Required for processing 35S pre-rRNA at site D. This chain is 18S rRNA aminocarboxypropyltransferase, found in Schizosaccharomyces pombe (strain 972 / ATCC 24843) (Fission yeast).